The sequence spans 231 residues: NAD(+) ADP-ribosyltransferase (231 aa).

The catalysed reaction is NAD(+) + (ADP-D-ribosyl)n-acceptor = nicotinamide + (ADP-D-ribosyl)n+1-acceptor + H(+).. With respect to regulation, activity increases up to 5-6 times with Mg(2+) at 50 uM or higher ion concentration. 3-aminobenzamide (3-ABA) inhibits the activity by up to half and nicotinamide to a lesser extent. Zn(2+) inhibits the activity to half-maximal rate but at 500 uM concentration of the ion. In terms of biological role, catalyzes auto- and hetero-ADP ribosylation and produces short oligomers by elongating the ADP-ribose chain (up to 6-mer). Binds DNA non-specifically but with high affinity. Forms very stable complexes with circular DNA wherein the circular DNA confers thermostability compared to linear DNA. This Saccharolobus solfataricus (Sulfolobus solfataricus) protein is NAD(+) ADP-ribosyltransferase.